The primary structure comprises 407 residues: O-antigen polymerase (407 aa).

Helical transmembrane passes span 2 to 22 (LIISYIALCLLFIVYLYTLSV), 31 to 51 (VMVPYLIITVPTLYVFEGIFV), 63 to 83 (YLFFYTCYITYIASFVISYLY), 101 to 121 (YVFTSLLFTFLAFIIYLPVLM), 141 to 161 (YGIYFYPSLMFSLVASICAFF), 168 to 185 (LFCISIVLFNCILIFLHG), 190 to 204 (IFSIFIAFILYLSYI), 211 to 231 (FMFLVKSFAVIAVIVTAFFAY), 319 to 339 (ADFGLFTPVWLVISGVFKGVL), 356 to 376 (FIMFLFCIGISVIPVSMGWLF), and 382 to 402 (IAFMVYIASSFVFSEHIRFVL).

The protein localises to the cell inner membrane. It carries out the reaction n lipid-linked O-antigen repeat units = a lipid-linked O antigen + (n-1) polyisoprenyl diphosphate.. Its pathway is bacterial outer membrane biogenesis; LPS O-antigen biosynthesis. In terms of biological role, polymerase involved in the biosynthesis of the lipopolysaccharide (LPS). Catalyzes the polymerization of the O-antigen repeat units on the periplasmic face of the inner membrane, leading to the formation of the lipid-linked O-antigen molecule. In Salmonella typhi, this protein is O-antigen polymerase (rfc).